The primary structure comprises 755 residues: Primary amine oxidase (755 aa).

An N-terminal signal peptide occupies residues 1–30 (MANGLKFSPRKTALALAVAVVCAWQSPVFA). Substrate-binding positions include 411–422 (YLDSGDYGMGTL) and 493–498 (VGNYDY). Asp413 acts as the Proton acceptor in catalysis. The Schiff-base intermediate with substrate; via topaquinone role is filled by Tyr496. Tyr496 is modified (2',4',5'-topaquinone). The Cu cation site is built by His554 and His556. Residues Asp563, Leu564, Asp565, Glu603, Tyr697, Asp700, Glu702, and Asp708 each coordinate Ca(2+). Asp563 lines the Mn(2+) pocket. Residue Asp565 participates in Mn(2+) binding. Asp708 contacts Mn(2+). Cu cation is bound at residue His719.

The protein belongs to the copper/topaquinone oxidase family. As to quaternary structure, homodimer. It depends on Cu cation as a cofactor. Requires Zn(2+) as cofactor. Ca(2+) is required as a cofactor. L-topaquinone serves as cofactor. The cofactor is Mn(2+). In terms of processing, topaquinone (TPQ) is generated by copper-dependent autoxidation of a specific tyrosyl residue.

It localises to the periplasm. The enzyme catalyses a primary methyl amine + O2 + H2O = an aldehyde + H2O2 + NH4(+). Active on tyramine, tryptamine, beta-phenethylamine and dopamine. In Klebsiella aerogenes (Enterobacter aerogenes), this protein is Primary amine oxidase (maoA).